Consider the following 455-residue polypeptide: Phosphomethylpyrimidine synthase (455 aa).

Substrate is bound by residues N80, M109, Y139, H175, S195–G197, D236–R239, and E275. H279 provides a ligand contact to Zn(2+). Substrate is bound at residue Y302. H343 serves as a coordination point for Zn(2+). Positions 423, 426, and 431 each coordinate [4Fe-4S] cluster.

The protein belongs to the ThiC family. Requires [4Fe-4S] cluster as cofactor.

It catalyses the reaction 5-amino-1-(5-phospho-beta-D-ribosyl)imidazole + S-adenosyl-L-methionine = 4-amino-2-methyl-5-(phosphooxymethyl)pyrimidine + CO + 5'-deoxyadenosine + formate + L-methionine + 3 H(+). Its pathway is cofactor biosynthesis; thiamine diphosphate biosynthesis. Functionally, catalyzes the synthesis of the hydroxymethylpyrimidine phosphate (HMP-P) moiety of thiamine from aminoimidazole ribotide (AIR) in a radical S-adenosyl-L-methionine (SAM)-dependent reaction. This is Phosphomethylpyrimidine synthase from Synechococcus sp. (strain JA-2-3B'a(2-13)) (Cyanobacteria bacterium Yellowstone B-Prime).